The sequence spans 336 residues: tRNA N6-adenosine threonylcarbamoyltransferase (336 aa).

Fe cation contacts are provided by histidine 111 and histidine 115. Residues 133–137, aspartate 166, glycine 179, and asparagine 276 contribute to the substrate site; that span reads LISGG. Aspartate 301 contributes to the Fe cation binding site.

Belongs to the KAE1 / TsaD family. Fe(2+) serves as cofactor.

It localises to the cytoplasm. The enzyme catalyses L-threonylcarbamoyladenylate + adenosine(37) in tRNA = N(6)-L-threonylcarbamoyladenosine(37) in tRNA + AMP + H(+). Functionally, required for the formation of a threonylcarbamoyl group on adenosine at position 37 (t(6)A37) in tRNAs that read codons beginning with adenine. Is involved in the transfer of the threonylcarbamoyl moiety of threonylcarbamoyl-AMP (TC-AMP) to the N6 group of A37, together with TsaE and TsaB. TsaD likely plays a direct catalytic role in this reaction. The chain is tRNA N6-adenosine threonylcarbamoyltransferase from Wolbachia pipientis subsp. Culex pipiens (strain wPip).